Consider the following 243-residue polypeptide: DNA repair protein RecO (243 aa).

Belongs to the RecO family.

Functionally, involved in DNA repair and RecF pathway recombination. The chain is DNA repair protein RecO from Geobacter sulfurreducens (strain ATCC 51573 / DSM 12127 / PCA).